A 792-amino-acid chain; its full sequence is Genome polyprotein (792 aa).

The segment at Met-1 to Met-15 is interaction with host EXOC1. Over Met-1–Ser-101 the chain is Cytoplasmic. The tract at residues Leu-37–Phe-72 is hydrophobic; homodimerization of capsid protein C. Residues Ser-101–Ala-114 constitute a propeptide, ER anchor for the capsid protein C, removed in mature form by serine protease NS3. The helical transmembrane segment at Val-102–Thr-119 threads the bilayer. At Arg-120 to Leu-242 the chain is on the extracellular side. The N-linked (GlcNAc...) asparagine; by host glycan is linked to Asn-183. A helical transmembrane segment spans residues Arg-243 to Thr-260. Residue Ser-261 is a topological domain, cytoplasmic. Residues Ile-262 to Ala-280 form a helical membrane-spanning segment. Residues Met-281–Gly-725 are Extracellular-facing. 4 disulfides stabilise this stretch: Cys-283–Cys-310, Cys-340–Cys-401, Cys-354–Cys-385, and Cys-372–Cys-396. The N-linked (GlcNAc...) asparagine; by host glycan is linked to Asn-347. A fusion peptide region spans residues Asp-378–Gly-391. Asn-433 is a glycosylation site (N-linked (GlcNAc...) asparagine; by host). 2 cysteine pairs are disulfide-bonded: Cys-465-Cys-565 and Cys-582-Cys-613. Residues Val-726–Leu-746 traverse the membrane as a helical segment. Residues Gly-747–Ser-752 lie on the Cytoplasmic side of the membrane. Residues Thr-753–Ala-775 traverse the membrane as a helical segment. Topologically, residues Asp-776–Ser-792 are extracellular. Cys-779 and Cys-790 are joined by a disulfide.

Homodimer. Interacts (via N-terminus) with host EXOC1 (via C-terminus); this interaction results in EXOC1 degradation through the proteasome degradation pathway. As to quaternary structure, forms heterodimers with envelope protein E in the endoplasmic reticulum and Golgi. In terms of assembly, homodimer; in the endoplasmic reticulum and Golgi. Interacts with protein prM. Interacts with non-structural protein 1. Homodimer; Homohexamer when secreted. Interacts with envelope protein E. Post-translationally, specific enzymatic cleavages in vivo yield mature proteins. Cleavages in the lumen of endoplasmic reticulum are performed by host signal peptidase, wereas cleavages in the cytoplasmic side are performed by serine protease NS3. Signal cleavage at the 2K-4B site requires a prior NS3 protease-mediated cleavage at the 4A-2K site. In terms of processing, N-glycosylated. N-glycosylated. The excreted form is glycosylated and this is required for efficient secretion of the protein from infected cells.

Its subcellular location is the virion. It is found in the host nucleus. The protein localises to the host cytoplasm. It localises to the host perinuclear region. The protein resides in the secreted. Its subcellular location is the virion membrane. It is found in the host endoplasmic reticulum membrane. Its function is as follows. Plays a role in virus budding by binding to the cell membrane and gathering the viral RNA into a nucleocapsid that forms the core of a mature virus particle. During virus entry, may induce genome penetration into the host cytoplasm after hemifusion induced by the surface proteins. Can migrate to the cell nucleus where it modulates host functions. Overcomes the anti-viral effects of host EXOC1 by sequestering and degrading the latter through the proteasome degradation pathway. Inhibits RNA silencing by interfering with host Dicer. In terms of biological role, prevents premature fusion activity of envelope proteins in trans-Golgi by binding to envelope protein E at pH6.0. After virion release in extracellular space, gets dissociated from E dimers. Functionally, acts as a chaperone for envelope protein E during intracellular virion assembly by masking and inactivating envelope protein E fusion peptide. prM is the only viral peptide matured by host furin in the trans-Golgi network probably to avoid catastrophic activation of the viral fusion activity in acidic Golgi compartment prior to virion release. prM-E cleavage is inefficient, and many virions are only partially matured. These uncleaved prM would play a role in immune evasion. Its function is as follows. May play a role in virus budding. Exerts cytotoxic effects by activating a mitochondrial apoptotic pathway through M ectodomain. May display a viroporin activity. Binds to host cell surface receptor and mediates fusion between viral and cellular membranes. Envelope protein is synthesized in the endoplasmic reticulum in the form of heterodimer with protein prM. They play a role in virion budding in the ER, and the newly formed immature particle is covered with 60 spikes composed of heterodimer between precursor prM and envelope protein E. The virion is transported to the Golgi apparatus where the low pH causes dissociation of PrM-E heterodimers and formation of E homodimers. prM-E cleavage is inefficient, and many virions are only partially matured. These uncleaved prM would play a role in immune evasion. In terms of biological role, involved in immune evasion, pathogenesis and viral replication. Once cleaved off the polyprotein, is targeted to three destinations: the viral replication cycle, the plasma membrane and the extracellular compartment. Essential for viral replication. Required for formation of the replication complex and recruitment of other non-structural proteins to the ER-derived membrane structures. Excreted as a hexameric lipoparticle that plays a role against host immune response. Antagonizing the complement function. Binds to the host macrophages and dendritic cells. Inhibits signal transduction originating from Toll-like receptor 3 (TLR3). Functionally, disrupts the host endothelial glycocalyx layer of host pulmonary microvascular endothelial cells, inducing degradation of sialic acid and shedding of heparan sulfate proteoglycans. NS1 induces expression of sialidases, heparanase, and activates cathepsin L, which activates heparanase via enzymatic cleavage. These effects are probably linked to the endothelial hyperpermeability observed in severe dengue disease. The sequence is that of Genome polyprotein from Aedes aegypti (Yellowfever mosquito).